We begin with the raw amino-acid sequence, 407 residues long: Histidine--tRNA ligase (407 aa).

The protein belongs to the class-II aminoacyl-tRNA synthetase family. In terms of assembly, homodimer.

It is found in the cytoplasm. The enzyme catalyses tRNA(His) + L-histidine + ATP = L-histidyl-tRNA(His) + AMP + diphosphate + H(+). This chain is Histidine--tRNA ligase, found in Wolbachia pipientis subsp. Culex pipiens (strain wPip).